We begin with the raw amino-acid sequence, 247 residues long: ATP synthase subunit a, chloroplastic (247 aa).

Transmembrane regions (helical) follow at residues 38 to 58, 95 to 115, 134 to 154, 199 to 219, and 220 to 240; these read QVLITSWVVIAILLGSAAIAV, VPFIGTMFLFIFVSNWSGALL, INTTVALALLTSAAYFYAGLT, LVVVVLVSLVPLVVPIPVMFL, and GLFTSGIQALIFATLAAAYIG.

The protein belongs to the ATPase A chain family. As to quaternary structure, F-type ATPases have 2 components, CF(1) - the catalytic core - and CF(0) - the membrane proton channel. CF(1) has five subunits: alpha(3), beta(3), gamma(1), delta(1), epsilon(1). CF(0) has four main subunits: a, b, b' and c.

The protein resides in the plastid. The protein localises to the chloroplast thylakoid membrane. In terms of biological role, key component of the proton channel; it plays a direct role in the translocation of protons across the membrane. This is ATP synthase subunit a, chloroplastic from Ceratophyllum demersum (Rigid hornwort).